Consider the following 205-residue polypeptide: Outer-membrane lipoprotein carrier protein (205 aa).

Residues M1–A19 form the signal peptide.

It belongs to the LolA family. Monomer.

It is found in the periplasm. In terms of biological role, participates in the translocation of lipoproteins from the inner membrane to the outer membrane. Only forms a complex with a lipoprotein if the residue after the N-terminal Cys is not an aspartate (The Asp acts as a targeting signal to indicate that the lipoprotein should stay in the inner membrane). In Francisella tularensis subsp. holarctica (strain LVS), this protein is Outer-membrane lipoprotein carrier protein.